The sequence spans 1274 residues: DENN domain-containing protein 3 (1274 aa).

Residues glycine 65 to aspartate 108 are disordered. The 171-residue stretch at glycine 75–leucine 245 folds into the uDENN domain. Basic residues predominate over residues lysine 76–lysine 88. The segment covering proline 89–aspartate 105 has biased composition (basic and acidic residues). The region spanning isoleucine 268–glutamine 400 is the cDENN domain. The dDENN domain maps to valine 402–alanine 506. Positions arginine 520–glutamate 970 are linker. Serine 554 and serine 572 each carry phosphoserine; by ULK1. Tyrosine 940 carries the post-translational modification Phosphotyrosine. 7 WD repeats span residues alanine 975–alanine 1013, histidine 1019–valine 1055, serine 1059–valine 1099, arginine 1103–glycine 1140, leucine 1146–leucine 1181, glutamine 1186–methionine 1228, and threonine 1234–valine 1273.

As to quaternary structure, forms oligomers. Interacts with 6 of the 7 known isoforms of 14-3-3 proteins.

Its subcellular location is the cytoplasm. Guanine nucleotide exchange factor (GEF) activating Rab12. Promotes the exchange of GDP to GTP, converting inactive GDP-bound Rab12 into its active GTP-bound form. Regulates autophagy in response to starvation through Rab12 activation. Starvation leads to ULK1/2-dependent phosphorylation of Ser-554 and Ser-572, which in turn allows recruitment of 14-3-3 adapter proteins and leads to up-regulation of GEF activity towards Rab12. Also plays a role in protein transport from recycling endosomes to lysosomes, regulating, for instance, the degradation of the transferrin receptor and of the amino acid transporter PAT4. Starvation also induces phosphorylation at Tyr-940, which leads to up-regulated GEF activity and initiates autophagy. This Mus musculus (Mouse) protein is DENN domain-containing protein 3 (Dennd3).